The following is a 664-amino-acid chain: Methionine--tRNA ligase (664 aa).

The short motif at 13–23 (PYTNGPCHIGH) is the 'HIGH' region element. The Zn(2+) site is built by cysteine 144, cysteine 147, cysteine 156, and cysteine 160. The 'KMSKS' region motif lies at 327–331 (KFSKS). Lysine 330 serves as a coordination point for ATP. The 99-residue stretch at 566–664 (EFGNLDIRIA…RPVKPGTKIR (99 aa)) folds into the tRNA-binding domain.

The protein belongs to the class-I aminoacyl-tRNA synthetase family. MetG type 1 subfamily. In terms of assembly, homodimer. The cofactor is Zn(2+).

The protein resides in the cytoplasm. It carries out the reaction tRNA(Met) + L-methionine + ATP = L-methionyl-tRNA(Met) + AMP + diphosphate. Is required not only for elongation of protein synthesis but also for the initiation of all mRNA translation through initiator tRNA(fMet) aminoacylation. The chain is Methionine--tRNA ligase from Methanoculleus marisnigri (strain ATCC 35101 / DSM 1498 / JR1).